The chain runs to 204 residues: LexA repressor (204 aa).

A DNA-binding region (H-T-H motif) is located at residues 29-49 (VREICKGVGLSSTSSVHGHLS). Catalysis depends on for autocatalytic cleavage activity residues serine 126 and lysine 163.

This sequence belongs to the peptidase S24 family. In terms of assembly, homodimer.

It carries out the reaction Hydrolysis of Ala-|-Gly bond in repressor LexA.. Functionally, represses a number of genes involved in the response to DNA damage (SOS response), including recA and lexA. In the presence of single-stranded DNA, RecA interacts with LexA causing an autocatalytic cleavage which disrupts the DNA-binding part of LexA, leading to derepression of the SOS regulon and eventually DNA repair. This chain is LexA repressor, found in Clostridium novyi (strain NT).